The following is an 806-amino-acid chain: Leucine--tRNA ligase (806 aa).

Positions 40–51 (PYPSGKGLHVGH) match the 'HIGH' region motif. The 'KMSKS' region signature appears at 580–584 (KMSKS). K583 is an ATP binding site.

It belongs to the class-I aminoacyl-tRNA synthetase family.

It is found in the cytoplasm. The catalysed reaction is tRNA(Leu) + L-leucine + ATP = L-leucyl-tRNA(Leu) + AMP + diphosphate. The chain is Leucine--tRNA ligase from Ureaplasma parvum serovar 3 (strain ATCC 27815 / 27 / NCTC 11736).